A 369-amino-acid chain; its full sequence is Uroporphyrinogen decarboxylase (369 aa).

Residues 1–26 are disordered; that stretch reads MPVLHVDARPGSGPGGVSPPPSGAAL. Residues 56–60, Asp-105, Tyr-180, Ser-235, and His-348 contribute to the substrate site; that span reads RQAGR.

This sequence belongs to the uroporphyrinogen decarboxylase family. In terms of assembly, homodimer.

It localises to the cytoplasm. It carries out the reaction uroporphyrinogen III + 4 H(+) = coproporphyrinogen III + 4 CO2. The protein operates within porphyrin-containing compound metabolism; protoporphyrin-IX biosynthesis; coproporphyrinogen-III from 5-aminolevulinate: step 4/4. Its function is as follows. Catalyzes the decarboxylation of four acetate groups of uroporphyrinogen-III to yield coproporphyrinogen-III. This is Uroporphyrinogen decarboxylase from Frankia casuarinae (strain DSM 45818 / CECT 9043 / HFP020203 / CcI3).